The sequence spans 458 residues: V-type ATP synthase beta chain (458 aa).

The protein belongs to the ATPase alpha/beta chains family.

Its function is as follows. Produces ATP from ADP in the presence of a proton gradient across the membrane. The V-type beta chain is a regulatory subunit. The polypeptide is V-type ATP synthase beta chain (Enterococcus faecalis (strain ATCC 700802 / V583)).